Reading from the N-terminus, the 207-residue chain is MINRKSFDDQIKLDHNITYLSGSDEAGRGCLAGPLVVASVILKPDYFNPLIKDSKKLNPKTRQVLFDEIIKNCLDYQIMIISSKQVDELNPLQASLLGFKTTISNLKITPDLALIDGNQNINLENIKTLSIIKGDDNSFSIACSSILAKVTRDKILDQYDQIYPNYGFKSHKGYCTKKHLLAIQKYGVLDIHRKSYKPIKKISKETS.

The 190-residue stretch at 18-207 (TYLSGSDEAG…PIKKISKETS (190 aa)) folds into the RNase H type-2 domain. A divalent metal cation-binding residues include Asp-24, Glu-25, and Asp-116.

Belongs to the RNase HII family. Mn(2+) is required as a cofactor. Requires Mg(2+) as cofactor.

The protein resides in the cytoplasm. The enzyme catalyses Endonucleolytic cleavage to 5'-phosphomonoester.. In terms of biological role, endonuclease that specifically degrades the RNA of RNA-DNA hybrids. This is Ribonuclease HII from Mycoplasma capricolum subsp. capricolum (strain California kid / ATCC 27343 / NCTC 10154).